Consider the following 580-residue polypeptide: Frizzled-10-B (580 aa).

An N-terminal signal peptide occupies residues 1 to 20 (MEPRVVTALLLSLAAALCSG). Residues 21–224 (ISSINPDRSG…DVYWSKNDKK (204 aa)) are Extracellular-facing. The region spanning 29–150 (SGEGRCQAIE…NDPNYLCMEA (122 aa)) is the FZ domain. Cystine bridges form between C34–C95, C42–C88, C79–C117, C106–C147, and C110–C134. N-linked (GlcNAc...) asparagine glycosylation occurs at N48. An N-linked (GlcNAc...) asparagine glycan is attached at N153. A disordered region spans residues 173-194 (RPNSGHEMYPKDPKGRSSCENS). Basic and acidic residues predominate over residues 180–189 (MYPKDPKGRS). Residues 225-245 (FAFIWIAIWSLLCFFSSAFTV) form a helical membrane-spanning segment. Topologically, residues 246-261 (LTFLVDPLRFKYPERP) are cytoplasmic. The chain crosses the membrane as a helical span at residues 262–282 (IIFLSMCYCVYSVGYIIRLFA). Over 283–309 (GADSIACDRDSGQLYVIQEGLESTGCT) the chain is Extracellular. A helical membrane pass occupies residues 310–330 (IVFLILYYFGMASSLWWVILT). Topologically, residues 331–350 (LTWFLAAGKKWGHEAIEANS) are cytoplasmic. The helical transmembrane segment at 351–371 (SYFHLAAWAIPAVKTIMILVM) threads the bilayer. Residues 372–392 (RRVAGDELTGVCYVGSMDVNA) are Extracellular-facing. A helical membrane pass occupies residues 393 to 413 (LTGFVLIPLACYLIIGTSFIL). Over 414–442 (SGFVALFHIRRVMKTGGENTDKLEKLMVR) the chain is Cytoplasmic. The chain crosses the membrane as a helical span at residues 443–463 (IGVFSVLYTVPATCVIACYFY). Over 464 to 501 (ERLNMDFWKILATQDKCKMDSQTKTLDCTMTSSIPAVE) the chain is Extracellular. A helical transmembrane segment spans residues 502–522 (IFMVKIFMLLVVGITSGMWIW). Residues 523–580 (TSKTVQSWQNVFSKSLKKRNRNKPASVITSAGIYKKPQQPPKIHHGKYESALRSPTCV) lie on the Cytoplasmic side of the membrane. The Lys-Thr-X-X-X-Trp motif, mediates interaction with the PDZ domain of Dvl family members motif lies at 525 to 530 (KTVQSW). Residues 558–580 (KPQQPPKIHHGKYESALRSPTCV) are disordered. Residues 578-580 (TCV) carry the PDZ-binding motif.

The protein belongs to the G-protein coupled receptor Fz/Smo family. In terms of tissue distribution, expressed in liver, lung, brain, testis, heart and ovary.

It is found in the cell membrane. Receptor for Wnt proteins. Most of frizzled receptors are coupled to the beta-catenin canonical signaling pathway, which leads to the activation of disheveled proteins, inhibition of GSK-3 kinase, nuclear accumulation of beta-catenin and activation of Wnt target genes. A second signaling pathway involving PKC and calcium fluxes has been seen for some family members, but it is not yet clear if it represents a distinct pathway or if it can be integrated in the canonical pathway, as PKC seems to be required for Wnt-mediated inactivation of GSK-3 kinase. Both pathways seem to involve interactions with G-proteins. May be involved in transduction and intercellular transmission of polarity information during tissue morphogenesis and/or in differentiated tissues. Activated by Wnt8. Could have an antagonizing activity in the morphogenesis during development. The chain is Frizzled-10-B (fzd10-b) from Xenopus laevis (African clawed frog).